Consider the following 260-residue polypeptide: MPQNEYMEEHRKRHGRRLDYEEKKRKRTAREAHKASADAQKIFGHKAKLHHARRHAEKVQMKKTLKAHDERNVKQKDDGAVKEGALPAYLLDRDGQKDAKALSSAVKDRRKDRAAKYSVPLPKVRGIAEEEMFKVIKTGKSKSKSWKRMVNKATFVGEGFTRKPVKLERFIRPMGLRMTKANVTHPELKTTFQLPILGVKKNPQSPLYTSLGVLTKGTILEVNVSELGMVTTGGKVVWSKYAQITNNPENDGCINSVLLV.

Disordered regions lie at residues 1 to 37 (MPQNEYMEEHRKRHGRRLDYEEKKRKRTAREAHKASA) and 60 to 79 (QMKKTLKAHDERNVKQKDDG). The Nuclear localization signal signature appears at 11–18 (RKRHGRRL). Basic and acidic residues-rich tracts occupy residues 17–36 (RLDYEEKKRKRTAREAHKAS) and 66–79 (KAHDERNVKQKDDG).

This sequence belongs to the eukaryotic ribosomal protein eS8 family. Ribosome biogenesis protein NSA2 subfamily. As to quaternary structure, component of the pre-66S ribosomal particle. Interacts with NOP7 and RRP1. Interacts with RSA4 (via WD repeats).

It localises to the nucleus. The protein resides in the nucleolus. Its function is as follows. Involved in the biogenesis of the 60S ribosomal subunit. May play a part in the quality control of pre-60S particles. The sequence is that of Ribosome biogenesis protein NSA2 (NSA2) from Cryptococcus neoformans var. neoformans serotype D (strain JEC21 / ATCC MYA-565) (Filobasidiella neoformans).